A 142-amino-acid polypeptide reads, in one-letter code: Movement protein (142 aa).

Residues 1–142 form a disordered region; the sequence is MDLPEDQARF…LDRSESLSRY (142 aa). 2 stretches are compositionally biased toward polar residues: residues 9–22 and 33–43; these read RFTN…TSME and LYQSASRSQMA. Residues 50-62 are compositionally biased toward low complexity; that stretch reads SIISRTSSWRTSP. 2 stretches are compositionally biased toward polar residues: residues 74 to 95 and 113 to 124; these read MNSI…SASP and TTLQRTNSGFST. Positions 125 to 142 are enriched in basic and acidic residues; the sequence is KETEMPRLLDRSESLSRY.

This sequence belongs to the luteoviruses movement protein family.

In terms of biological role, transports viral genome to neighboring plant cells directly through plasmosdesmata, without any budding. The movement protein allows efficient cell to cell propagation, by bypassing the host cell wall barrier. This Cicer arietinum (Chickpea) protein is Movement protein.